The sequence spans 1164 residues: Shugoshin 2A (1164 aa).

The stretch at 62-113 forms a coiled coil; that stretch reads LSKEKENSRRITTEKMQLQKEVEKLNFENTFLRLKLNTLNKKLVEIESHVSN. Disordered regions lie at residues 160 to 269, 287 to 314, 390 to 492, 521 to 541, and 917 to 992; these read SEND…VTMR, HQPTSSPGSNWNNEIHGHTNETSNNTQR, RKVK…PFSR, TFVIRKSEKDNLFPNQEDKDT, and PLDS…ETHG. A compositionally biased stretch (low complexity) spans 182 to 198; sequence SKTSPDSTSSVSRQPSS. 2 stretches are compositionally biased toward polar residues: residues 238–247 and 288–299; these read DQSPKSSLSE and QPTSSPGSNWNN. The segment covering 390–412 has biased composition (basic and acidic residues); sequence RKVKGASSDKKRESSKRECKDGS. Over residues 443-472 the composition is skewed to polar residues; sequence CISSTEQPSQVNTQKKRTLQNSSDQENIQN. The span at 525 to 541 shows a compositional bias: basic and acidic residues; it reads RKSEKDNLFPNQEDKDT. Polar residues predominate over residues 934 to 948; sequence GEQTNLPKMQKQSAG. Residue Ser1042 is modified to Phosphoserine. A disordered region spans residues 1092-1164; sequence ITTGTRNPHH…EPSLRSKMRR (73 aa). A compositionally biased stretch (low complexity) spans 1112 to 1125; sequence TSLVLVDTSSVSDT. Positions 1126–1140 are enriched in polar residues; it reads NPANPENESEGQSSH.

The protein belongs to the shugoshin family. Part of an astrin (SPAG5)-kinastrin (SKAP) complex containing KNSTRN, SPAG5, PLK1, DYNLL1 and SGO2A. Interacts with CDCA8. Interacts with PPP2CA. Ubiquitously expressed in proliferating cells. Highly expressed in the testis and oocytes.

It localises to the nucleus. It is found in the chromosome. Its subcellular location is the centromere. The protein localises to the kinetochore. Cooperates with PPP2CA to protect centromeric cohesin from separase-mediated cleavage in oocytes specifically during meiosis I. Has a crucial role in protecting REC8 at centromeres from cleavage by separase. During meiosis, protects centromeric cohesion complexes until metaphase II/anaphase II transition, preventing premature release of meiosis-specific REC8 cohesin complexes from anaphase I centromeres. Is thus essential for an accurate gametogenesis. May act by targeting PPP2CA to centromeres, thus leading to cohesin dephosphorylation. Essential for recruiting KIF2C to the inner centromere and for correcting defective kinetochore attachments. Involved in centromeric enrichment of AUKRB in prometaphase. The chain is Shugoshin 2A from Mus musculus (Mouse).